The following is a 208-amino-acid chain: Probable acyl-homoserine-lactone synthase (208 aa).

This sequence belongs to the autoinducer synthase family.

It catalyses the reaction a fatty acyl-[ACP] + S-adenosyl-L-methionine = an N-acyl-L-homoserine lactone + S-methyl-5'-thioadenosine + holo-[ACP] + H(+). Functionally, required for the synthesis of OHHL (N-(3-oxooctanoyl)-L-homoserine lactone), an autoinducer molecule which binds to TraR and thus acts in the control of conjugal transfer. This is Probable acyl-homoserine-lactone synthase (traI) from Sinorhizobium fredii (strain NBRC 101917 / NGR234).